The sequence spans 236 residues: THO complex subunit 7B (236 aa).

Positions 99–228 (EANLREKESF…IRSASEDQRN (130 aa)) form a coiled coil.

The protein belongs to the THOC7 family. Component of the THO complex, which is composed of THO1, THO2, THO3, THO5, THO6 and THO7.

The protein localises to the nucleus. Its function is as follows. Acts as a component of the THO subcomplex of the TREX complex which is thought to couple mRNA transcription, processing and nuclear export. The polypeptide is THO complex subunit 7B (THO7B) (Arabidopsis thaliana (Mouse-ear cress)).